The chain runs to 289 residues: 33 kDa chaperonin (289 aa).

2 disulfides stabilise this stretch: cysteine 237–cysteine 239 and cysteine 270–cysteine 273.

Belongs to the HSP33 family. In terms of processing, under oxidizing conditions two disulfide bonds are formed involving the reactive cysteines. Under reducing conditions zinc is bound to the reactive cysteines and the protein is inactive.

Its subcellular location is the cytoplasm. Its function is as follows. Redox regulated molecular chaperone. Protects both thermally unfolding and oxidatively damaged proteins from irreversible aggregation. Plays an important role in the bacterial defense system toward oxidative stress. This chain is 33 kDa chaperonin, found in Oceanobacillus iheyensis (strain DSM 14371 / CIP 107618 / JCM 11309 / KCTC 3954 / HTE831).